Here is a 399-residue protein sequence, read N- to C-terminus: Acetate kinase (399 aa).

Residue Asn-9 coordinates Mg(2+). Lys-16 is an ATP binding site. Arg-90 is a binding site for substrate. The active-site Proton donor/acceptor is the Asp-147. ATP is bound by residues 207 to 211, 281 to 283, and 333 to 337; these read HLGNG, DFR, and GVGEN. Residue Glu-387 coordinates Mg(2+).

This sequence belongs to the acetokinase family. Homodimer. The cofactor is Mg(2+). Requires Mn(2+) as cofactor.

It is found in the cytoplasm. It catalyses the reaction acetate + ATP = acetyl phosphate + ADP. Its pathway is metabolic intermediate biosynthesis; acetyl-CoA biosynthesis; acetyl-CoA from acetate: step 1/2. In terms of biological role, catalyzes the formation of acetyl phosphate from acetate and ATP. Can also catalyze the reverse reaction. The protein is Acetate kinase of Mycobacterium sp. (strain KMS).